The following is an 874-amino-acid chain: Cellulose synthase catalytic subunit [UDP-forming] (874 aa).

Helical transmembrane passes span 30 to 50 (SPFS…VFPL), 151 to 171 (ILGV…TQPF), 173 to 193 (PLSQ…VRRM), and 230 to 250 (LVCG…LVLG). The tract at residues 271–364 (QWPTVDIFVP…FVAIFDCDHV (94 aa)) is catalytic subdomain A. Residue Asp-313 is part of the active site. Substrate contacts are provided by Asp-360 and Asp-362. The catalytic subdomain B stretch occupies residues 441-501 (KPLDEIGGIA…GQRIRWARGM (61 aa)). The active site involves Asp-457. Helical transmembrane passes span 525–545 (LNAM…TAPL), 547–567 (FLLL…LFVI), 592–612 (IYET…LINP), 634–654 (VISR…AAGV), and 668–688 (VIVS…AVAV). Residues 694 to 790 (QVRRAHRVEI…QHIDFVQCTF (97 aa)) enclose the PilZ domain. A helical membrane pass occupies residues 833 to 853 (SVKVIFRSLTALIAWIVSFIP).

This sequence belongs to the glycosyltransferase 2 family. The cofactor is Mg(2+).

The protein resides in the cell inner membrane. The enzyme catalyses [(1-&gt;4)-beta-D-glucosyl](n) + UDP-alpha-D-glucose = [(1-&gt;4)-beta-D-glucosyl](n+1) + UDP + H(+). Its pathway is glycan metabolism; bacterial cellulose biosynthesis. Activated by bis-(3'-5') cyclic diguanylic acid (c-di-GMP). Catalytic subunit of cellulose synthase. It polymerizes uridine 5'-diphosphate glucose to cellulose, which is produced as an extracellular component for mechanical and chemical protection at the onset of the stationary phase, when the cells exhibit multicellular behavior (rdar morphotype). Coexpression of cellulose and thin aggregative fimbriae leads to a hydrophobic network with tightly packed cells embedded in a highly inert matrix. In Salmonella typhi, this protein is Cellulose synthase catalytic subunit [UDP-forming] (bcsA).